Consider the following 223-residue polypeptide: DnaJ homolog subfamily B member 9 (223 aa).

The first 23 residues, 1 to 23 (MATPQSIFIFAICILMITELILA), serve as a signal peptide directing secretion. Residues 26-90 (SYYDILGVPK…NRRKEYDTLG (65 aa)) enclose the J domain. Residues 91–223 (HSAFTSGKGQ…VTTYTDCSGQ (133 aa)) are divergent targeting domain. S133 is modified (phosphoserine).

As to quaternary structure, interacts with HSPA5/BiP; interaction is direct. Interacts with ERN1/IRE1 (via the luminal region). Interacts with DERL1. In terms of tissue distribution, widely expressed. Expressed at highest level in the liver, placenta and kidney.

The protein resides in the endoplasmic reticulum lumen. In terms of biological role, co-chaperone for Hsp70 protein HSPA5/BiP that acts as a key repressor of the ERN1/IRE1-mediated unfolded protein response (UPR). J domain-containing co-chaperones stimulate the ATPase activity of Hsp70 proteins and are required for efficient substrate recognition by Hsp70 proteins. In the unstressed endoplasmic reticulum, interacts with the luminal region of ERN1/IRE1 and selectively recruits HSPA5/BiP: HSPA5/BiP disrupts the dimerization of the active ERN1/IRE1 luminal region, thereby inactivating ERN1/IRE1. Also involved in endoplasmic reticulum-associated degradation (ERAD) of misfolded proteins. Required for survival of B-cell progenitors and normal antibody production. The polypeptide is DnaJ homolog subfamily B member 9 (DNAJB9) (Homo sapiens (Human)).